A 237-amino-acid chain; its full sequence is Phosphatidylserine decarboxylase proenzyme (237 aa).

Catalysis depends on Ser206, which acts as the Schiff-base intermediate with substrate; via pyruvic acid. Ser206 bears the Pyruvic acid (Ser); by autocatalysis mark.

Belongs to the phosphatidylserine decarboxylase family. PSD-A subfamily. As to quaternary structure, heterodimer of a large membrane-associated beta subunit and a small pyruvoyl-containing alpha subunit. The cofactor is pyruvate. Post-translationally, is synthesized initially as an inactive proenzyme. Formation of the active enzyme involves a self-maturation process in which the active site pyruvoyl group is generated from an internal serine residue via an autocatalytic post-translational modification. Two non-identical subunits are generated from the proenzyme in this reaction, and the pyruvate is formed at the N-terminus of the alpha chain, which is derived from the carboxyl end of the proenzyme. The post-translation cleavage follows an unusual pathway, termed non-hydrolytic serinolysis, in which the side chain hydroxyl group of the serine supplies its oxygen atom to form the C-terminus of the beta chain, while the remainder of the serine residue undergoes an oxidative deamination to produce ammonia and the pyruvoyl prosthetic group on the alpha chain.

Its subcellular location is the cell membrane. The enzyme catalyses a 1,2-diacyl-sn-glycero-3-phospho-L-serine + H(+) = a 1,2-diacyl-sn-glycero-3-phosphoethanolamine + CO2. It participates in phospholipid metabolism; phosphatidylethanolamine biosynthesis; phosphatidylethanolamine from CDP-diacylglycerol: step 2/2. Its function is as follows. Catalyzes the formation of phosphatidylethanolamine (PtdEtn) from phosphatidylserine (PtdSer). In Rhodococcus opacus (strain B4), this protein is Phosphatidylserine decarboxylase proenzyme.